The sequence spans 72 residues: Translation initiation factor IF-1 (72 aa).

One can recognise an S1-like domain in the interval 2-72 (AKEDCIEMQG…NKGRIIFRSR (71 aa)).

The protein belongs to the IF-1 family. As to quaternary structure, component of the 30S ribosomal translation pre-initiation complex which assembles on the 30S ribosome in the order IF-2 and IF-3, IF-1 and N-formylmethionyl-tRNA(fMet); mRNA recruitment can occur at any time during PIC assembly.

The protein localises to the cytoplasm. Functionally, one of the essential components for the initiation of protein synthesis. Stabilizes the binding of IF-2 and IF-3 on the 30S subunit to which N-formylmethionyl-tRNA(fMet) subsequently binds. Helps modulate mRNA selection, yielding the 30S pre-initiation complex (PIC). Upon addition of the 50S ribosomal subunit IF-1, IF-2 and IF-3 are released leaving the mature 70S translation initiation complex. This is Translation initiation factor IF-1 from Pasteurella multocida (strain Pm70).